A 331-amino-acid chain; its full sequence is Ketol-acid reductoisomerase (NADP(+)) (331 aa).

The region spanning alanine 2–threonine 182 is the KARI N-terminal Rossmann domain. NADP(+) contacts are provided by residues tyrosine 25–glutamine 28, serine 51, and aspartate 83–glutamine 86. Histidine 108 is an active-site residue. Glycine 134 is an NADP(+) binding site. Residues threonine 183–leucine 329 enclose the KARI C-terminal knotted domain. Mg(2+) contacts are provided by aspartate 191, glutamate 195, glutamate 227, and glutamate 231. Serine 252 is a substrate binding site.

This sequence belongs to the ketol-acid reductoisomerase family. Requires Mg(2+) as cofactor.

The catalysed reaction is (2R)-2,3-dihydroxy-3-methylbutanoate + NADP(+) = (2S)-2-acetolactate + NADPH + H(+). The enzyme catalyses (2R,3R)-2,3-dihydroxy-3-methylpentanoate + NADP(+) = (S)-2-ethyl-2-hydroxy-3-oxobutanoate + NADPH + H(+). The protein operates within amino-acid biosynthesis; L-isoleucine biosynthesis; L-isoleucine from 2-oxobutanoate: step 2/4. Its pathway is amino-acid biosynthesis; L-valine biosynthesis; L-valine from pyruvate: step 2/4. Involved in the biosynthesis of branched-chain amino acids (BCAA). Catalyzes an alkyl-migration followed by a ketol-acid reduction of (S)-2-acetolactate (S2AL) to yield (R)-2,3-dihydroxy-isovalerate. In the isomerase reaction, S2AL is rearranged via a Mg-dependent methyl migration to produce 3-hydroxy-3-methyl-2-ketobutyrate (HMKB). In the reductase reaction, this 2-ketoacid undergoes a metal-dependent reduction by NADPH to yield (R)-2,3-dihydroxy-isovalerate. The chain is Ketol-acid reductoisomerase (NADP(+)) from Ruminiclostridium cellulolyticum (strain ATCC 35319 / DSM 5812 / JCM 6584 / H10) (Clostridium cellulolyticum).